The chain runs to 301 residues: Hydroxymycolate synthase MmaA4 (301 aa).

S-adenosyl-L-methionine is bound by residues 42-43, 81-83, 103-108, 132-133, and Ile145; these read YS, GCG, TLSKNQ, and WE. The active site involves Cys278.

The protein belongs to the CFA/CMAS family. Monomer.

It participates in lipid metabolism; mycolic acid biosynthesis. Its function is as follows. Involved in the biosynthesis of hydroxymycolate, a common precursor of oxygenated mycolic acids (methoxymycolate and ketomycolate). Probably transfers a methyl group from the S-adenosylmethionine (SAM) cofactor and, subsequently or simultaneously, a water molecule onto the double bound of ethylene substrates, leading to the formation of the hydroxylated product at the distal position. The protein is Hydroxymycolate synthase MmaA4 (cmaA) of Mycobacterium bovis (strain ATCC BAA-935 / AF2122/97).